The following is a 50-amino-acid chain: uncharacterized protein (50 aa).

An N-terminal signal peptide occupies residues 1 to 22; it reads MSKVAALGWGTLVYLGVGLLLA.

This is an uncharacterized protein from Dictyostelium discoideum (Social amoeba).